The following is a 232-amino-acid chain: Small ribosomal subunit protein uS2 (232 aa).

Belongs to the universal ribosomal protein uS2 family.

In Desulforamulus reducens (strain ATCC BAA-1160 / DSM 100696 / MI-1) (Desulfotomaculum reducens), this protein is Small ribosomal subunit protein uS2.